A 225-amino-acid polypeptide reads, in one-letter code: 7-carboxy-7-deazaguanine synthase (225 aa).

Residues 14–16 (LQG) and R29 contribute to the substrate site. Positions 20–225 (HFGKSAFFIR…LQTHKWLGVL (206 aa)) constitute a Radical SAM core domain. [4Fe-4S] cluster is bound by residues C33, C37, and C40. T42 provides a ligand contact to Mg(2+). Residue T77 participates in substrate binding. S-adenosyl-L-methionine contacts are provided by residues G79 and 127 to 129 (SPK).

Belongs to the radical SAM superfamily. 7-carboxy-7-deazaguanine synthase family. As to quaternary structure, homodimer. [4Fe-4S] cluster is required as a cofactor. Requires S-adenosyl-L-methionine as cofactor. It depends on Mg(2+) as a cofactor.

It carries out the reaction 6-carboxy-5,6,7,8-tetrahydropterin + H(+) = 7-carboxy-7-deazaguanine + NH4(+). The protein operates within purine metabolism; 7-cyano-7-deazaguanine biosynthesis. Its function is as follows. Catalyzes the complex heterocyclic radical-mediated conversion of 6-carboxy-5,6,7,8-tetrahydropterin (CPH4) to 7-carboxy-7-deazaguanine (CDG), a step common to the biosynthetic pathways of all 7-deazapurine-containing compounds. The protein is 7-carboxy-7-deazaguanine synthase of Prochlorococcus marinus (strain SARG / CCMP1375 / SS120).